The chain runs to 262 residues: 3-deoxy-manno-octulosonate cytidylyltransferase (262 aa).

It belongs to the KdsB family.

It is found in the cytoplasm. The enzyme catalyses 3-deoxy-alpha-D-manno-oct-2-ulosonate + CTP = CMP-3-deoxy-beta-D-manno-octulosonate + diphosphate. It participates in nucleotide-sugar biosynthesis; CMP-3-deoxy-D-manno-octulosonate biosynthesis; CMP-3-deoxy-D-manno-octulosonate from 3-deoxy-D-manno-octulosonate and CTP: step 1/1. Its pathway is bacterial outer membrane biogenesis; lipopolysaccharide biosynthesis. Activates KDO (a required 8-carbon sugar) for incorporation into bacterial lipopolysaccharide in Gram-negative bacteria. The sequence is that of 3-deoxy-manno-octulosonate cytidylyltransferase from Koribacter versatilis (strain Ellin345).